We begin with the raw amino-acid sequence, 529 residues long: Bifunctional purine biosynthesis protein PurH (529 aa).

Residues glutamine 2 to valine 148 form the MGS-like domain.

Belongs to the PurH family.

The catalysed reaction is (6R)-10-formyltetrahydrofolate + 5-amino-1-(5-phospho-beta-D-ribosyl)imidazole-4-carboxamide = 5-formamido-1-(5-phospho-D-ribosyl)imidazole-4-carboxamide + (6S)-5,6,7,8-tetrahydrofolate. The enzyme catalyses IMP + H2O = 5-formamido-1-(5-phospho-D-ribosyl)imidazole-4-carboxamide. It functions in the pathway purine metabolism; IMP biosynthesis via de novo pathway; 5-formamido-1-(5-phospho-D-ribosyl)imidazole-4-carboxamide from 5-amino-1-(5-phospho-D-ribosyl)imidazole-4-carboxamide (10-formyl THF route): step 1/1. It participates in purine metabolism; IMP biosynthesis via de novo pathway; IMP from 5-formamido-1-(5-phospho-D-ribosyl)imidazole-4-carboxamide: step 1/1. In Photorhabdus laumondii subsp. laumondii (strain DSM 15139 / CIP 105565 / TT01) (Photorhabdus luminescens subsp. laumondii), this protein is Bifunctional purine biosynthesis protein PurH.